The primary structure comprises 470 residues: Cysteine--tRNA ligase (470 aa).

C28 provides a ligand contact to Zn(2+). The 'HIGH' region signature appears at 30 to 40 (PTVYNYIHIGN). 3 residues coordinate Zn(2+): C212, H237, and E241. Positions 271-275 (KMSKS) match the 'KMSKS' region motif. K274 contacts ATP.

Belongs to the class-I aminoacyl-tRNA synthetase family. In terms of assembly, monomer. Zn(2+) serves as cofactor.

The protein resides in the cytoplasm. The enzyme catalyses tRNA(Cys) + L-cysteine + ATP = L-cysteinyl-tRNA(Cys) + AMP + diphosphate. The polypeptide is Cysteine--tRNA ligase (Lactiplantibacillus plantarum (strain ATCC BAA-793 / NCIMB 8826 / WCFS1) (Lactobacillus plantarum)).